The following is a 621-amino-acid chain: ATP-dependent DNA helicase Q1 (621 aa).

The region spanning 100 to 275 (VNATMARKDI…QKILCVEKCL (176 aa)) is the Helicase ATP-binding domain. 113-120 (MPTGGGKS) lines the ATP pocket. A DEVH box motif is present at residues 219–222 (DEVH). A Helicase C-terminal domain is found at 296–451 (SAEDFIENIA…EMVSYCQNIS (156 aa)). C453, C471, C475, and C478 together coordinate Zn(2+). N6-acetyllysine is present on residues K514 and K522. 2 positions are modified to phosphoserine: S597 and S602.

It belongs to the helicase family. RecQ subfamily. As to quaternary structure, may form homodimers or higher order oligomers. Interacts with EXO1. Interacts with MLH1. Interacts with PARP1. Mg(2+) is required as a cofactor. Mn(2+) serves as cofactor. The cofactor is Zn(2+).

It is found in the nucleus. It carries out the reaction Couples ATP hydrolysis with the unwinding of duplex DNA by translocating in the 3'-5' direction.. The enzyme catalyses ATP + H2O = ADP + phosphate + H(+). The catalysed reaction is dATP + H2O = dADP + phosphate + H(+). Functionally, DNA helicase that plays a role in DNA damage repair and genome stability. Exhibits a magnesium- and ATP-dependent DNA-helicase activity that unwinds single- and double-stranded DNA in a 3'-5' direction. Plays a role in restoring regressed replication forks. Required to restart stalled replication forks induced by abortive topoisomerase 1 and 2 lesions. May play a role in the repair of DNA that is damaged by ultraviolet light or other mutagens. This is ATP-dependent DNA helicase Q1 (Recql) from Rattus norvegicus (Rat).